The following is a 394-amino-acid chain: MSPSVEVTPAHTPTSYEVTNSLDSYRGYDHVHWYVGNAKQAASFYITRMGFSPIAYKGLETGSRDVTTHVVGNGQVRFAFSSALRTGEPQADEIHAHLVKHGDAVKDVAFEVDNVEQLFSAAVKKGVRVISEPKVLKDAHGSVTYAVISTYGDTTHTLIERGSYEGAFLPGFVDTSANKDPIAAFLPNIELMHIDHCVGNQDWNEMDNACKYYEETLGFHRFWSVDDKDICTEFSALKSVVMASPNEKIKMPVNEPAVGKKKSQIEEYIDFYDGPGIQHIALRTDCILDTVRDLRARGVEFISVPGSYYENMKERLAKSSLKLEEKFEDIQALNILIDFDEGGYLLQLFTKPLMDRPTVFIEIIQRRNFEGFGAGNFKSLFEAIEREQAKRGNL.

VOC domains are found at residues 27 to 161 and 193 to 351; these read GYDH…LIER and HIDH…LFTK. Positions 196, 279, and 362 each coordinate Fe cation.

It belongs to the 4HPPD family. The cofactor is Fe cation.

It carries out the reaction 3-(4-hydroxyphenyl)pyruvate + O2 = homogentisate + CO2. It participates in amino-acid degradation; L-phenylalanine degradation; acetoacetate and fumarate from L-phenylalanine: step 3/6. This chain is 4-hydroxyphenylpyruvate dioxygenase, found in Yarrowia lipolytica (strain CLIB 122 / E 150) (Yeast).